A 101-amino-acid chain; its full sequence is Small ribosomal subunit protein uS14 (101 aa).

This sequence belongs to the universal ribosomal protein uS14 family. In terms of assembly, part of the 30S ribosomal subunit. Contacts proteins S3 and S10.

In terms of biological role, binds 16S rRNA, required for the assembly of 30S particles and may also be responsible for determining the conformation of the 16S rRNA at the A site. The sequence is that of Small ribosomal subunit protein uS14 from Idiomarina loihiensis (strain ATCC BAA-735 / DSM 15497 / L2-TR).